Consider the following 332-residue polypeptide: Aquaporin-7-1 (332 aa).

The Cytoplasmic portion of the chain corresponds to 1–66 (MSGQHQITEQ…RHAIRMPMAE (66 aa)). Residues 67–87 (FFGVALLIIFGAGSACQVVLS) form a helical membrane-spanning segment. The Extracellular portion of the chain corresponds to 88 to 100 (TNPNVASSDRGSF). A helical transmembrane segment spans residues 101–121 (LSINLGWAIGIAMGAWVSGGI). The Cytoplasmic portion of the chain corresponds to 122-144 (SGGHINPAITIAMATYRGFPWRR). Residues 127 to 129 (NPA) carry the NPA 1 motif. The chain crosses the membrane as a helical span at residues 145–165 (VPSYIFAQVLGGVVGAALVYA). The Extracellular segment spans residues 166-199 (NYIHAIDIFEGGRHVRTQATASLFATYALPYMTQ). The chain crosses the membrane as a helical span at residues 200–220 (VSCFFSEFLATAVLSMMVLAL). The Cytoplasmic segment spans residues 221–230 (TDNRNGAPTN). A helical transmembrane segment spans residues 231–251 (GLLPFALFVLFIGLGASLGME). The Extracellular portion of the chain corresponds to 252–283 (TAYALNPARDFGPRLFLAMSGYGKALFNYRSQ). The short motif at 257–259 (NPA) is the NPA 2 element. The chain crosses the membrane as a helical span at residues 284 to 304 (YWLWAPIIAPVLGAQAGGLLY). Over 305-332 (DTFLYDGDNSPIKWRRASSQECQLAEVV) the chain is Cytoplasmic.

Belongs to the MIP/aquaporin (TC 1.A.8) family.

It is found in the membrane. It carries out the reaction H2O(in) = H2O(out). Functionally, water channel required to facilitate the transport of water across membranes. Does not mediate the transport carbon dioxide across the membrane. This chain is Aquaporin-7-1, found in Laccaria bicolor (Bicoloured deceiver).